Here is a 680-residue protein sequence, read N- to C-terminus: Transketolase 1 (680 aa).

Substrate is bound at residue H30. Thiamine diphosphate-binding positions include H69 and 116 to 118 (GPL). D157 is a binding site for Mg(2+). Thiamine diphosphate contacts are provided by G158 and N187. Mg(2+)-binding residues include N187 and I189. H263 provides a ligand contact to substrate. H263 contributes to the thiamine diphosphate binding site. 2 positions are modified to phosphoserine: S286 and S335. Residues R359 and S386 each contribute to the substrate site. At S402 the chain carries Phosphoserine. Thiamine diphosphate is bound by residues E418 and F445. The active-site Proton donor is E418. H469 and D477 together coordinate substrate. Residue S492 is modified to Phosphoserine. Residue R528 coordinates substrate. A Glycyl lysine isopeptide (Lys-Gly) (interchain with G-Cter in ubiquitin) cross-link involves residue K647.

Belongs to the transketolase family. As to quaternary structure, homodimer. The cofactor is Mg(2+). It depends on Ca(2+) as a cofactor. Mn(2+) serves as cofactor. Requires Co(2+) as cofactor. Thiamine diphosphate is required as a cofactor.

The catalysed reaction is D-sedoheptulose 7-phosphate + D-glyceraldehyde 3-phosphate = aldehydo-D-ribose 5-phosphate + D-xylulose 5-phosphate. Its function is as follows. Catalyzes the transfer of a two-carbon ketol group from a ketose donor to an aldose acceptor, via a covalent intermediate with the cofactor thiamine pyrophosphate. In Saccharomyces cerevisiae (strain ATCC 204508 / S288c) (Baker's yeast), this protein is Transketolase 1 (TKL1).